The following is a 291-amino-acid chain: Putative heme-binding peroxidase (291 aa).

The Proton acceptor role is filled by His-61. Position 185 (His-185) interacts with heme b. Trp-201 serves as the catalytic Tryptophan radical intermediate.

This sequence belongs to the peroxidase family. Cytochrome c peroxidase subfamily. It depends on heme b as a cofactor.

Destroys radicals which are normally produced within the cells and which are toxic to biological systems. The protein is Putative heme-binding peroxidase (CCP2) of Candida albicans (strain SC5314 / ATCC MYA-2876) (Yeast).